We begin with the raw amino-acid sequence, 583 residues long: AP-1-like transcription factor YAP1 (583 aa).

Positions 1–86 (MSTSTAKRPF…KELEDKVSQL (86 aa)) are disordered. A compositionally biased stretch (basic and acidic residues) spans 8-17 (RPFDNKRAGS). Over residues 24 to 36 (SDSGGNNSGSSPA) the composition is skewed to low complexity. Positions 37 to 46 (SKRRERKPGR) are enriched in basic residues. The Bipartite nuclear localization signal signature appears at 41–48 (ERKPGRKP). Composition is skewed to basic and acidic residues over residues 47 to 58 (KPLETEAKDKRT) and 67 to 84 (AFRE…DKVS). Residues 51 to 114 (TEAKDKRTAQ…TNLLSELKRY (64 aa)) form the bZIP domain. The basic motif stretch occupies residues 54–77 (KDKRTAQNRAAQRAFRERRERKMK). Residues 79–86 (LEDKVSQL) are leucine-zipper. A Bipartite nuclear localization signal motif is present at residues 120-127 (KKRDSILL). Residues 177–195 (SKIPSPSSDSTSPSASTSI) are compositionally biased toward low complexity. Residues 177–233 (SKIPSPSSDSTSPSASTSILDNANNKSVSSTNLNHSRSSISNSSSSPSNVNGLSSRK) form a disordered region. The segment covering 196–207 (LDNANNKSVSST) has biased composition (polar residues). Low complexity predominate over residues 208–230 (NLNHSRSSISNSSSSPSNVNGLS). Residues 265 to 272 (CSKLSMAC) form a n-CRD region. Disulfide bonds link C265-C531 and C272-C562. 2 disordered regions span residues 275–329 (KSNP…SASA) and 350–373 (QYND…VSAW). The segment covering 297–312 (KSNSNVNITNHNNNKI) has biased composition (low complexity). Over residues 316-329 (DLSSSAPLHDSASA) the composition is skewed to polar residues. Positions 531-562 (CSEVWDRITAHPRYSDLDIDGLCLELRTKAKC) are c-CRD. The Nuclear export signal motif lies at 547-554 (LDIDGLCL).

The protein belongs to the bZIP family. YAP subfamily. Oxidative stress induces conformational changes through oxidation of cysteine residues, masking the nuclear export signal, thus abolishing nuclear export by CRM1/exportin 1.

It localises to the nucleus. Its subcellular location is the cytoplasm. Transcription activator involved in oxidative stress response and cadmium resistance. Regulates the transcription of genes encoding antioxidant enzymes and components of the cellular thiol-reducing pathways. Activity of the transcription factor is controlled through oxidation of specific cysteine residues resulting in the alteration of its subcellular location. Activation by alkyl hydroperoxides or cadmium induces nuclear accumulation and as a result YAP1 transcriptional activity. The protein is AP-1-like transcription factor YAP1 (YAP1) of Kluyveromyces lactis (strain ATCC 8585 / CBS 2359 / DSM 70799 / NBRC 1267 / NRRL Y-1140 / WM37) (Yeast).